The following is a 447-amino-acid chain: Tubulin beta chain (447 aa).

Residues Gln-11, Glu-69, Ser-138, Gly-142, Thr-143, Gly-144, Asn-204, and Asn-226 each coordinate GTP. A Mg(2+)-binding site is contributed by Glu-69. The segment at 424–447 is disordered; it reads QYQEASVSEGEEEYDEEAPLEGEE. Over residues 432–447 the composition is skewed to acidic residues; it reads EGEEEYDEEAPLEGEE.

Belongs to the tubulin family. Dimer of alpha and beta chains. A typical microtubule is a hollow water-filled tube with an outer diameter of 25 nm and an inner diameter of 15 nM. Alpha-beta heterodimers associate head-to-tail to form protofilaments running lengthwise along the microtubule wall with the beta-tubulin subunit facing the microtubule plus end conferring a structural polarity. Microtubules usually have 13 protofilaments but different protofilament numbers can be found in some organisms and specialized cells. Mg(2+) serves as cofactor.

The protein localises to the cytoplasm. It localises to the cytoskeleton. In terms of biological role, tubulin is the major constituent of microtubules, a cylinder consisting of laterally associated linear protofilaments composed of alpha- and beta-tubulin heterodimers. Microtubules grow by the addition of GTP-tubulin dimers to the microtubule end, where a stabilizing cap forms. Below the cap, tubulin dimers are in GDP-bound state, owing to GTPase activity of alpha-tubulin. The protein is Tubulin beta chain (TUB1) of Cercospora beticola (Sugarbeet leaf spot fungus).